The chain runs to 408 residues: LL-diaminopimelate aminotransferase (408 aa).

The substrate site is built by Y15 and G42. Residues Y72, 108–109, Y132, N187, Y218, and 246–248 contribute to the pyridoxal 5'-phosphate site; these read SK and SFS. Positions 109, 132, and 187 each coordinate substrate. K249 carries the post-translational modification N6-(pyridoxal phosphate)lysine. Pyridoxal 5'-phosphate contacts are provided by R257 and N292. Residues N292 and R388 each contribute to the substrate site.

It belongs to the class-I pyridoxal-phosphate-dependent aminotransferase family. LL-diaminopimelate aminotransferase subfamily. In terms of assembly, homodimer. Requires pyridoxal 5'-phosphate as cofactor.

It carries out the reaction (2S,6S)-2,6-diaminopimelate + 2-oxoglutarate = (S)-2,3,4,5-tetrahydrodipicolinate + L-glutamate + H2O + H(+). The protein operates within amino-acid biosynthesis; L-lysine biosynthesis via DAP pathway; LL-2,6-diaminopimelate from (S)-tetrahydrodipicolinate (aminotransferase route): step 1/1. In terms of biological role, involved in the synthesis of meso-diaminopimelate (m-DAP or DL-DAP), required for both lysine and peptidoglycan biosynthesis. Catalyzes the direct conversion of tetrahydrodipicolinate to LL-diaminopimelate. This Prochlorococcus marinus subsp. pastoris (strain CCMP1986 / NIES-2087 / MED4) protein is LL-diaminopimelate aminotransferase.